A 491-amino-acid polypeptide reads, in one-letter code: Xaa-Pro aminopeptidase 1 (491 aa).

Residues 1–32 are disordered; that stretch reads MAEELTPENPAIPETPEETEEPIKQRKNGLYP. Mn(2+)-binding residues include Asp308, Asp320, His403, Glu434, and Glu458.

The protein belongs to the peptidase M24B family. As to quaternary structure, homodimer. It depends on Mn(2+) as a cofactor.

It carries out the reaction Release of any N-terminal amino acid, including proline, that is linked to proline, even from a dipeptide or tripeptide.. This is Xaa-Pro aminopeptidase 1 (pepPI) from Streptomyces coelicolor (strain ATCC BAA-471 / A3(2) / M145).